Consider the following 449-residue polypeptide: Exodeoxyribonuclease 7 large subunit (449 aa).

This sequence belongs to the XseA family. In terms of assembly, heterooligomer composed of large and small subunits.

Its subcellular location is the cytoplasm. The enzyme catalyses Exonucleolytic cleavage in either 5'- to 3'- or 3'- to 5'-direction to yield nucleoside 5'-phosphates.. Functionally, bidirectionally degrades single-stranded DNA into large acid-insoluble oligonucleotides, which are then degraded further into small acid-soluble oligonucleotides. The chain is Exodeoxyribonuclease 7 large subunit from Aliivibrio fischeri (strain ATCC 700601 / ES114) (Vibrio fischeri).